We begin with the raw amino-acid sequence, 207 residues long: Glycerol-3-phosphate acyltransferase (207 aa).

Transmembrane regions (helical) follow at residues 8 to 28 (NIVF…LILA), 64 to 84 (LGIA…LVGI), 92 to 112 (TLWA…YLGL), 122 to 142 (LGVY…VWIV), 154 to 174 (SLLG…GLGI), and 176 to 196 (SNIP…PNIV).

The protein belongs to the PlsY family. In terms of assembly, probably interacts with PlsX.

Its subcellular location is the cell inner membrane. The enzyme catalyses an acyl phosphate + sn-glycerol 3-phosphate = a 1-acyl-sn-glycero-3-phosphate + phosphate. It functions in the pathway lipid metabolism; phospholipid metabolism. Its function is as follows. Catalyzes the transfer of an acyl group from acyl-phosphate (acyl-PO(4)) to glycerol-3-phosphate (G3P) to form lysophosphatidic acid (LPA). This enzyme utilizes acyl-phosphate as fatty acyl donor, but not acyl-CoA or acyl-ACP. This Aliarcobacter butzleri (strain RM4018) (Arcobacter butzleri) protein is Glycerol-3-phosphate acyltransferase.